The primary structure comprises 141 residues: Myosin regulatory light chain cdc4 (141 aa).

Phosphoserine is present on residues Ser2 and Ser6. EF-hand domains follow at residues 3–38 (TDDS…CGQN), 74–109 (GDPE…LGEK), and 109–141 (KLSN…ILAN). Ca(2+)-binding residues include Asp87, Asp89, Thr91, Met93, and Glu98.

As to quaternary structure, binds to myosin II chains myo2 and myo3. Interacts with vps27 and a PI 4-kinase pik1. In terms of processing, phosphorylated on either Ser-2 or Ser-6 but not both. Phosphorylation is not essential for the function of the protein.

The protein resides in the cytoplasm. In terms of biological role, involved in cytokinesis. Required for the formation and function of the contractile ring. This chain is Myosin regulatory light chain cdc4 (cdc4), found in Schizosaccharomyces pombe (strain 972 / ATCC 24843) (Fission yeast).